Consider the following 92-residue polypeptide: MLKLNLQFFASKKGVGSTKNGRDSQSKRLGAKRADGQTVSAGSILYRQRGTKIHPGMNVGRGGDDTLFATATGVVRFERLGRDKKQVSVYPA.

The propeptide occupies 1-9; the sequence is MLKLNLQFF. Residues 14–34 are disordered; it reads GVGSTKNGRDSQSKRLGAKRA.

The protein belongs to the bacterial ribosomal protein bL27 family. The N-terminus is cleaved by ribosomal processing cysteine protease Prp.

This Exiguobacterium sibiricum (strain DSM 17290 / CCUG 55495 / CIP 109462 / JCM 13490 / 255-15) protein is Large ribosomal subunit protein bL27.